A 479-amino-acid chain; its full sequence is Ribosomal RNA small subunit methyltransferase F (479 aa).

S-adenosyl-L-methionine-binding positions include 125–131 (AAAPGSK), Glu-149, Asp-176, and Asp-194. The active-site Nucleophile is the Cys-247.

This sequence belongs to the class I-like SAM-binding methyltransferase superfamily. RsmB/NOP family.

Its subcellular location is the cytoplasm. The enzyme catalyses cytidine(1407) in 16S rRNA + S-adenosyl-L-methionine = 5-methylcytidine(1407) in 16S rRNA + S-adenosyl-L-homocysteine + H(+). In terms of biological role, specifically methylates the cytosine at position 1407 (m5C1407) of 16S rRNA. The chain is Ribosomal RNA small subunit methyltransferase F from Escherichia coli O139:H28 (strain E24377A / ETEC).